Reading from the N-terminus, the 466-residue chain is VGFKAGVKEYKLTYYTPEYETKDTDILAAFRVTPQPGVPPEEAGAAVAAESSTGTWTTVWTDGLTSLDRYKGRCYNIEPVAGETDQYICYVAYPLDLFEEGSVTNMFTSIVGNVFGFKALRALRLEDLRIPTAYVKTFQGPPHGIQVERDKLNKYGRPLLGCTIKPKLGLSAKNYGRACYECLRGGLDFTKDDENVNSQPFMRWRDRFLFCAEAIYKSQAETGEIKGHYLNATAGTCEEMMKRAVFARELGVPIIMFDYLTGGFTANTSLAHYCRDNGLLLHIHRAMHAVIDRQKNHGMHFRVLAKALRMSGGDHIHAGTVVGKLEGERDITLGFVDLLRDDFIEKDRSRGIYFTQDWVSLPGVIPVASGGIHVWHMPALTEIFGDDSVLQFGGGTLGHPWGNAPGAVANRVALEACVQARNEGRDLAAEGNAIIREASKWSPELAAACEVWKEIKFEFKAVDTLD.

Lys4 carries the N6,N6,N6-trimethyllysine modification. Asn113 and Thr163 together coordinate substrate. The active-site Proton acceptor is Lys165. Lys167 contributes to the substrate binding site. Lys191, Asp193, and Glu194 together coordinate Mg(2+). At Lys191 the chain carries N6-carboxylysine. His284 serves as the catalytic Proton acceptor. 3 residues coordinate substrate: Arg285, His317, and Ser369.

Belongs to the RuBisCO large chain family. Type I subfamily. Heterohexadecamer of 8 large chains and 8 small chains; disulfide-linked. The disulfide link is formed within the large subunit homodimers. Mg(2+) is required as a cofactor. In terms of processing, the disulfide bond which can form in the large chain dimeric partners within the hexadecamer appears to be associated with oxidative stress and protein turnover.

It is found in the plastid. Its subcellular location is the chloroplast. It carries out the reaction 2 (2R)-3-phosphoglycerate + 2 H(+) = D-ribulose 1,5-bisphosphate + CO2 + H2O. The enzyme catalyses D-ribulose 1,5-bisphosphate + O2 = 2-phosphoglycolate + (2R)-3-phosphoglycerate + 2 H(+). Functionally, ruBisCO catalyzes two reactions: the carboxylation of D-ribulose 1,5-bisphosphate, the primary event in carbon dioxide fixation, as well as the oxidative fragmentation of the pentose substrate in the photorespiration process. Both reactions occur simultaneously and in competition at the same active site. This Barleria prionitis (Porcupine flower) protein is Ribulose bisphosphate carboxylase large chain.